The chain runs to 524 residues: 3-epi-6-deoxocathasterone 23-monooxygenase CYP90C1 (524 aa).

Residues 25-45 (YLVAGFLVLTAGILLRPWLWL) form a helical membrane-spanning segment. Cys-463 contributes to the heme binding site.

It belongs to the cytochrome P450 family. It depends on heme as a cofactor. Widely expressed.

It localises to the endoplasmic reticulum membrane. The catalysed reaction is 3-epi-6-deoxocathasterone + reduced [NADPH--hemoprotein reductase] + O2 = 6-deoxotyphasterol + oxidized [NADPH--hemoprotein reductase] + H2O + H(+). The enzyme catalyses (22S,24R)-22-hydroxy-5alpha-ergostan-3-one + reduced [NADPH--hemoprotein reductase] + O2 = 3-dehydro-6-deoxoteasterone + oxidized [NADPH--hemoprotein reductase] + H2O + H(+). It participates in plant hormone biosynthesis; brassinosteroid biosynthesis. In terms of biological role, involved in brassinosteroid (BR) biosynthesis. Converts typhasterol (TY) to cathasterone (CS) and 6-deoxotyphasterol (6-deoxoTY) to 6-deoxocathasterone (6-deoxoCT). C-23 hydroxylase that converts directly (22S,24R)-22-hydroxy-5-alpha-ergostan-3-one and 3-epi-6-deoxocathasterone to 3-dehydro-6-deoxoteasterone (6-deoxo3DT, 6-deoxo3DHT) and 6-deoxotyphasterol (6-deoxoTY), respectively. These C-23 hydroxylation shortcuts bypass campestanol, 6-deoxocathasterone, and 6-deoxoteasterone (6-deoxoTE). Also catalyzes the conversion of cathasterone to teasterone (TE), (22S,24R)-22-hydroxyergost-4-en-3-one (22-OH-4-en-3-one) to (22R,23R)-22,23-dihydroxy-campest-4-en-3-one (22,23-diOH-4-en-3-one) and (22S)-22-hydroxycampesterol (22-OHCR) to (22R,23R)-22,23-dihydroxycampesterol (22,23-diOHCR). Required for the regulation of polar elongation of leaf cells. Required for the longitudinal elongation of floral organs. In Arabidopsis thaliana (Mouse-ear cress), this protein is 3-epi-6-deoxocathasterone 23-monooxygenase CYP90C1.